The primary structure comprises 255 residues: Triosephosphate isomerase (255 aa).

9 to 11 (NWK) serves as a coordination point for substrate. His100 functions as the Electrophile in the catalytic mechanism. The active-site Proton acceptor is Glu169. Residues Gly175, Ser208, and 229–230 (GG) contribute to the substrate site.

Belongs to the triosephosphate isomerase family. In terms of assembly, homodimer.

It localises to the cytoplasm. It carries out the reaction D-glyceraldehyde 3-phosphate = dihydroxyacetone phosphate. It functions in the pathway carbohydrate biosynthesis; gluconeogenesis. It participates in carbohydrate degradation; glycolysis; D-glyceraldehyde 3-phosphate from glycerone phosphate: step 1/1. Its function is as follows. Involved in the gluconeogenesis. Catalyzes stereospecifically the conversion of dihydroxyacetone phosphate (DHAP) to D-glyceraldehyde-3-phosphate (G3P). The sequence is that of Triosephosphate isomerase from Synechococcus sp. (strain JA-3-3Ab) (Cyanobacteria bacterium Yellowstone A-Prime).